Consider the following 283-residue polypeptide: MAAARRGSAGSEARLSLATFLLGASVLALPLLTRAGLQGRTGLALYVAGLNALLLLLYRPPRYQIAIRACFLGFVFGCGVLLSFSQSSWNHFGWYVCSLSLFHYSEYLVTAVNNPKSLSLDSFLLNHSLEYTVAALSSWIEFTLENIFWPELKQITWLSATGLLMVVFGECLRKAAMFTAGSNFNHVVQSEKSDTHTLVTSGVYAWCRHPSYVGWFYWSIGTQVMLCNPICGVVYALTVWRFFRDRTEEEEISLIHFFGEEYLDYKKRVPTGLPFIKGVKVEL.

The Cytoplasmic portion of the chain corresponds to 1 to 15 (MAAARRGSAGSEARL). A helical transmembrane segment spans residues 16-32 (SLATFLLGASVLALPLL). Residues 33 to 40 (TRAGLQGR) lie on the Lumenal side of the membrane. Residues 41–58 (TGLALYVAGLNALLLLLY) traverse the membrane as a helical segment. Topologically, residues 59-68 (RPPRYQIAIR) are cytoplasmic. A helical transmembrane segment spans residues 69–86 (ACFLGFVFGCGVLLSFSQ). Over 87-91 (SSWNH) the chain is Lumenal. A helical membrane pass occupies residues 92-111 (FGWYVCSLSLFHYSEYLVTA). Residues 112 to 130 (VNNPKSLSLDSFLLNHSLE) are Cytoplasmic-facing. Residues 131–148 (YTVAALSSWIEFTLENIF) form a helical membrane-spanning segment. The Lumenal segment spans residues 149 to 153 (WPELK). Residues 154–173 (QITWLSATGLLMVVFGECLR) form a helical membrane-spanning segment. Over 174–211 (KAAMFTAGSNFNHVVQSEKSDTHTLVTSGVYAWCRHPS) the chain is Cytoplasmic. S-adenosyl-L-methionine is bound by residues Gln189, 196–199 (HTLV), Tyr204, and 209–212 (HPSY). The helical transmembrane segment at 212-227 (YVGWFYWSIGTQVMLC) threads the bilayer. Position 228 (Asn228) is a topological domain, lumenal. Residues 229 to 243 (PICGVVYALTVWRFF) traverse the membrane as a helical segment. Over 244–283 (RDRTEEEEISLIHFFGEEYLDYKKRVPTGLPFIKGVKVEL) the chain is Cytoplasmic. Arg246 lines the substrate pocket. Glu250 lines the S-adenosyl-L-methionine pocket.

It belongs to the class VI-like SAM-binding methyltransferase superfamily. Isoprenylcysteine carboxyl methyltransferase family. In terms of tissue distribution, highly enriched in adult cerebellum, with a low level expression in other brain regions.

The protein localises to the endoplasmic reticulum membrane. The catalysed reaction is [protein]-C-terminal S-[(2E,6E)-farnesyl]-L-cysteine + S-adenosyl-L-methionine = [protein]-C-terminal S-[(2E,6E)-farnesyl]-L-cysteine methyl ester + S-adenosyl-L-homocysteine. Functionally, catalyzes the post-translational methylation of isoprenylated C-terminal cysteine residues. In Mus musculus (Mouse), this protein is Protein-S-isoprenylcysteine O-methyltransferase (Icmt).